The following is a 225-amino-acid chain: UPF0758 protein XOO0462 (225 aa).

One can recognise an MPN domain in the interval 102-224 (ALSDPPSVGR…PVSLAERGWL (123 aa)). H173, H175, and D186 together coordinate Zn(2+). The JAMM motif motif lies at 173–186 (HNHPSGNPEPSEAD).

This sequence belongs to the UPF0758 family.

This Xanthomonas oryzae pv. oryzae (strain MAFF 311018) protein is UPF0758 protein XOO0462.